We begin with the raw amino-acid sequence, 359 residues long: DNA polymerase IV (359 aa).

A UmuC domain is found at 4–184; sequence IVHVDMDAFY…LKVNRIPGVG (181 aa). Mg(2+) is bound by residues Asp-8 and Asp-102. Glu-103 is a catalytic residue.

Belongs to the DNA polymerase type-Y family. Monomer. Mg(2+) is required as a cofactor.

The protein localises to the cytoplasm. It catalyses the reaction DNA(n) + a 2'-deoxyribonucleoside 5'-triphosphate = DNA(n+1) + diphosphate. Its function is as follows. Poorly processive, error-prone DNA polymerase involved in untargeted mutagenesis. Copies undamaged DNA at stalled replication forks, which arise in vivo from mismatched or misaligned primer ends. These misaligned primers can be extended by PolIV. Exhibits no 3'-5' exonuclease (proofreading) activity. May be involved in translesional synthesis, in conjunction with the beta clamp from PolIII. This Xanthomonas euvesicatoria pv. vesicatoria (strain 85-10) (Xanthomonas campestris pv. vesicatoria) protein is DNA polymerase IV.